An 812-amino-acid polypeptide reads, in one-letter code: 1,4-alpha-glucan branching enzyme GlgB (812 aa).

Residues 1–11 (MNNGDVNNGTA) show a composition bias toward polar residues. The segment at 1–83 (MNNGDVNNGT…SALPADPPAV (83 aa)) is disordered. A compositionally biased stretch (low complexity) spans 49-64 (SSASAQPGQTADDPAV). Residues 65-83 (PSAPPSAPPSALPADPPAV) show a composition bias toward pro residues. Residue Asp-490 is the Nucleophile of the active site. The active-site Proton donor is the Glu-543.

Belongs to the glycosyl hydrolase 13 family. GlgB subfamily. In terms of assembly, monomer.

It carries out the reaction Transfers a segment of a (1-&gt;4)-alpha-D-glucan chain to a primary hydroxy group in a similar glucan chain.. Its pathway is glycan biosynthesis; glycogen biosynthesis. Functionally, catalyzes the formation of the alpha-1,6-glucosidic linkages in glycogen by scission of a 1,4-alpha-linked oligosaccharide from growing alpha-1,4-glucan chains and the subsequent attachment of the oligosaccharide to the alpha-1,6 position. The protein is 1,4-alpha-glucan branching enzyme GlgB of Frankia casuarinae (strain DSM 45818 / CECT 9043 / HFP020203 / CcI3).